The primary structure comprises 361 residues: 3-dehydroquinate synthase (361 aa).

NAD(+) is bound by residues 106–110 (GVVGD), 130–131 (TT), Lys143, and Lys152. Residues Glu185, His247, and His264 each contribute to the Zn(2+) site.

It belongs to the sugar phosphate cyclases superfamily. Dehydroquinate synthase family. The cofactor is NAD(+). Co(2+) serves as cofactor. Requires Zn(2+) as cofactor.

Its subcellular location is the cytoplasm. The catalysed reaction is 7-phospho-2-dehydro-3-deoxy-D-arabino-heptonate = 3-dehydroquinate + phosphate. Its pathway is metabolic intermediate biosynthesis; chorismate biosynthesis; chorismate from D-erythrose 4-phosphate and phosphoenolpyruvate: step 2/7. Catalyzes the conversion of 3-deoxy-D-arabino-heptulosonate 7-phosphate (DAHP) to dehydroquinate (DHQ). In Gloeobacter violaceus (strain ATCC 29082 / PCC 7421), this protein is 3-dehydroquinate synthase.